Here is a 512-residue protein sequence, read N- to C-terminus: Transmembrane protein 102 (512 aa).

Over 1 to 267 (MASAVWGNAP…EAWPTLCPAQ (267 aa)) the chain is Extracellular. Residues 168-258 (PVPGGRDWIH…PGPQPSEARE (91 aa)) are disordered. Composition is skewed to basic and acidic residues over residues 174-186 (DWIHPTDSREGPR) and 195-209 (PHSDIIEPEAHESLE). A compositionally biased stretch (polar residues) spans 210-226 (KSPSNVSVPESPQQNLT). The chain crosses the membrane as a helical span at residues 268–284 (VAAWFFASLAAVAESLF). The Cytoplasmic segment spans residues 285–512 (PVPGAPRLVH…GLAGVGAGSH (228 aa)).

Interacts with CSF2RB; this interaction occurs preferentially in the absence of CSF2.

It is found in the cell membrane. Its function is as follows. Selectively involved in CSF2 deprivation-induced apoptosis via a mitochondria-dependent pathway. The chain is Transmembrane protein 102 (TMEM102) from Bos taurus (Bovine).